The sequence spans 145 residues: Large ribosomal subunit protein uL11 (145 aa).

This sequence belongs to the universal ribosomal protein uL11 family. In terms of assembly, part of the ribosomal stalk of the 50S ribosomal subunit. Interacts with L10 and the large rRNA to form the base of the stalk. L10 forms an elongated spine to which L12 dimers bind in a sequential fashion forming a multimeric L10(L12)X complex. One or more lysine residues are methylated.

Forms part of the ribosomal stalk which helps the ribosome interact with GTP-bound translation factors. This chain is Large ribosomal subunit protein uL11, found in Rickettsia canadensis (strain McKiel).